Here is a 176-residue protein sequence, read N- to C-terminus: Cathelicidin-2 (176 aa).

An N-terminal signal peptide occupies residues 1–29 (METQRASLSLGRCSLWLLLLGLVLPSASA). Q30 is subject to Pyrrolidone carboxylic acid. Residues 30 to 130 (QALSYREAVL…DINCNELQSV (101 aa)) constitute a propeptide that is removed on maturation. 2 disulfide bridges follow: C85–C96 and C107–C124. The tract at residues 157–176 (IFPPIRPPFRPPLGPFPGRR) is disordered. P173 bears the Proline amide mark. A propeptide spans 174–176 (GRR) (removed in mature form).

This sequence belongs to the cathelicidin family. Post-translationally, elastase is responsible for its maturation. Large granules of neutrophils.

It localises to the secreted. Its function is as follows. Exerts, in vitro, a potent antimicrobial activity. Probably due to an impairment of the function of the respiratory chain and of energy-dependent activities in the inner membrane of susceptible microorganisms. In Bos taurus (Bovine), this protein is Cathelicidin-2 (CATHL2).